Reading from the N-terminus, the 89-residue chain is Small ribosomal subunit protein uS15 (89 aa).

Belongs to the universal ribosomal protein uS15 family. In terms of assembly, part of the 30S ribosomal subunit. Forms a bridge to the 50S subunit in the 70S ribosome, contacting the 23S rRNA.

One of the primary rRNA binding proteins, it binds directly to 16S rRNA where it helps nucleate assembly of the platform of the 30S subunit by binding and bridging several RNA helices of the 16S rRNA. In terms of biological role, forms an intersubunit bridge (bridge B4) with the 23S rRNA of the 50S subunit in the ribosome. The polypeptide is Small ribosomal subunit protein uS15 (Thiobacillus denitrificans (strain ATCC 25259 / T1)).